The following is a 201-amino-acid chain: Small ribosomal subunit protein uS4c (201 aa).

The tract at residues Gly-20–Gln-43 is disordered. The S4 RNA-binding domain maps to Met-89 to Asn-150.

The protein belongs to the universal ribosomal protein uS4 family. In terms of assembly, part of the 30S ribosomal subunit. Contacts protein S5. The interaction surface between S4 and S5 is involved in control of translational fidelity.

It is found in the plastid. It localises to the chloroplast. One of the primary rRNA binding proteins, it binds directly to 16S rRNA where it nucleates assembly of the body of the 30S subunit. In terms of biological role, with S5 and S12 plays an important role in translational accuracy. This is Small ribosomal subunit protein uS4c (rps4) from Populus alba (White poplar).